Reading from the N-terminus, the 245-residue chain is uncharacterized protein (245 aa).

Residues 1–20 (MIKQTIVALLLSVGASSVFA) form the signal peptide.

To E.coli YmcB.

This is an uncharacterized protein from Escherichia coli (strain K12).